The primary structure comprises 253 residues: uncharacterized protein (253 aa).

One can recognise a BON 1 domain in the interval 4-73 (FGKSTADRVK…IDVSGVTVLQ (70 aa)). Positions 79–93 (AAQTAPTTPAQTSPS) are enriched in low complexity. Residues 79–105 (AAQTAPTTPAQTSPSVQDSPSTPVQMP) are disordered. Residues 119–188 (DTSRIAKAVL…VDISGLRVAQ (70 aa)) enclose the BON 2 domain. Positions 204 to 251 (TVYTVKPGDSLSKIAEHYYGDQMEYKKIAHYNNISNPDLIQPGQKLRI) constitute a LysM domain.

This is an uncharacterized protein from Deinococcus radiodurans (strain ATCC 13939 / DSM 20539 / JCM 16871 / CCUG 27074 / LMG 4051 / NBRC 15346 / NCIMB 9279 / VKM B-1422 / R1).